A 424-amino-acid polypeptide reads, in one-letter code: Serine--tRNA ligase (424 aa).

231 to 233 (TAE) is an L-serine binding site. 262–264 (RAE) is a binding site for ATP. E285 is an L-serine binding site. 349-352 (EISS) lines the ATP pocket. S385 provides a ligand contact to L-serine.

It belongs to the class-II aminoacyl-tRNA synthetase family. Type-1 seryl-tRNA synthetase subfamily. In terms of assembly, homodimer. The tRNA molecule binds across the dimer.

The protein resides in the cytoplasm. The catalysed reaction is tRNA(Ser) + L-serine + ATP = L-seryl-tRNA(Ser) + AMP + diphosphate + H(+). It carries out the reaction tRNA(Sec) + L-serine + ATP = L-seryl-tRNA(Sec) + AMP + diphosphate + H(+). The protein operates within aminoacyl-tRNA biosynthesis; selenocysteinyl-tRNA(Sec) biosynthesis; L-seryl-tRNA(Sec) from L-serine and tRNA(Sec): step 1/1. Its function is as follows. Catalyzes the attachment of serine to tRNA(Ser). Is also able to aminoacylate tRNA(Sec) with serine, to form the misacylated tRNA L-seryl-tRNA(Sec), which will be further converted into selenocysteinyl-tRNA(Sec). The polypeptide is Serine--tRNA ligase (Geobacillus sp. (strain WCH70)).